Consider the following 428-residue polypeptide: Glutamate-1-semialdehyde 2,1-aminomutase 1 (428 aa).

Lys267 carries the N6-(pyridoxal phosphate)lysine modification.

It belongs to the class-III pyridoxal-phosphate-dependent aminotransferase family. HemL subfamily. As to quaternary structure, homodimer. The cofactor is pyridoxal 5'-phosphate.

The protein localises to the cytoplasm. It carries out the reaction (S)-4-amino-5-oxopentanoate = 5-aminolevulinate. The protein operates within porphyrin-containing compound metabolism; protoporphyrin-IX biosynthesis; 5-aminolevulinate from L-glutamyl-tRNA(Glu): step 2/2. This chain is Glutamate-1-semialdehyde 2,1-aminomutase 1 (hemL1), found in Staphylococcus aureus (strain NCTC 8325 / PS 47).